The sequence spans 154 residues: Endoribonuclease YbeY (154 aa).

3 residues coordinate Zn(2+): histidine 114, histidine 118, and histidine 124.

It belongs to the endoribonuclease YbeY family. The cofactor is Zn(2+).

The protein localises to the cytoplasm. Functionally, single strand-specific metallo-endoribonuclease involved in late-stage 70S ribosome quality control and in maturation of the 3' terminus of the 16S rRNA. The protein is Endoribonuclease YbeY of Haemophilus influenzae (strain 86-028NP).